The chain runs to 152 residues: Nucleoplasmin-like protein (152 aa).

The span at Glu109–Asp128 shows a compositional bias: acidic residues. Residues Glu109–Lys152 are disordered. The segment covering Lys136–Asn145 has biased composition (basic and acidic residues).

Belongs to the nucleoplasmin family. As to quaternary structure, decamer formed by two pentameric rings associated in a head-to-head fashion.

The protein resides in the nucleus. Its function is as follows. Binds to core histones and functions in the ATP-facilitated assembly of approximately regularly spaced nucleosomal arrays. May participate in parallel with other histone-binding proteins such as NAP-1. In terms of biological role, inactive for chromatin assembly. In vitro it appears to form a high molecular mass aggregate with the core histones. This is Nucleoplasmin-like protein (Nlp) from Drosophila melanogaster (Fruit fly).